The sequence spans 169 residues: Disulfide bond formation protein B (169 aa).

Residues 1 to 13 are Cytoplasmic-facing; the sequence is MQSLISFAHSRLS. Residues 14–30 form a helical membrane-spanning segment; that stretch reads WGILALSALALESAALY. The Periplasmic portion of the chain corresponds to 31-48; that stretch reads FQHIMKLDPCVMCIYQRV. The cysteines at positions 40 and 43 are disulfide-linked. The chain crosses the membrane as a helical span at residues 49–64; the sequence is AVFGLLGAGLFGFMAP. The Cytoplasmic portion of the chain corresponds to 65 to 71; the sequence is ANRVIRA. Residues 72–89 traverse the membrane as a helical segment; that stretch reads LGALLWGISAAWGLKLAL. At 90–144 the chain is on the periplasmic side; it reads ELVDMQNNPNPFSTCSFLPEFPSWLQLHEWLPSVFMPTGMCTDIPWEFAGVTMGE. A disulfide bridge links Cys104 with Cys130. A helical transmembrane segment spans residues 145–163; that stretch reads WMIVAFSVYLLAWLAFIVP. Topologically, residues 164 to 169 are cytoplasmic; that stretch reads MLKKSA.

The protein belongs to the DsbB family.

The protein resides in the cell inner membrane. In terms of biological role, required for disulfide bond formation in some periplasmic proteins. Acts by oxidizing the DsbA protein. The chain is Disulfide bond formation protein B from Shewanella amazonensis (strain ATCC BAA-1098 / SB2B).